The chain runs to 1887 residues: Nuclear pore membrane glycoprotein 210 (1887 aa).

Residues 1 to 26 (MAARGRGLLLLTLSVLLAAGPSAAAA) form the signal peptide. Over 27-1808 (KLNIPKVLLP…LFQHFLDSYQ (1782 aa)) the chain is Perinuclear space. Residues Asn44, Asn337, Asn405, Asn484, Asn681, Asn801, Asn926, Asn1039, Asn1116, Asn1135, Asn1362, and Asn1441 are each glycosylated (N-linked (GlcNAc...) asparagine). Residues 1078–1151 (FPPFRLMPRK…VQAVDAETGK (74 aa)) enclose the BIG2 domain. The helical transmembrane segment at 1809-1829 (VMFFTLFALLAGTAVMIIAYH) threads the bilayer. Residues 1830 to 1887 (TVCTPRDLAVPAALTPRASPGHSPHYFAASSPTSPNALPPARKASPPSGLWSPAYASH) are Cytoplasmic-facing. Thr1844 bears the Phosphothreonine mark. A disordered region spans residues 1853-1887 (PHYFAASSPTSPNALPPARKASPPSGLWSPAYASH). A phosphoserine mark is found at Ser1874, Ser1877, Ser1881, and Ser1886.

This sequence belongs to the NUP210 family. In terms of assembly, forms dimers and possibly higher-order oligomers. In terms of processing, N-glycosylated, but not all potential glycosylation sites may be used. Contains high-mannose type oligosaccharides. Post-translationally, phosphorylated at Ser-1881 in mitosis specifically; not phosphorylated in interphase. Ubiquitous expression, with highest levels in lung, liver, pancreas, testis, and ovary, intermediate levels in brain, kidney, and spleen, and lowest levels in heart and skeletal muscle.

It is found in the nucleus. Its subcellular location is the nuclear pore complex. The protein resides in the nucleus membrane. It localises to the endoplasmic reticulum membrane. Functionally, nucleoporin essential for nuclear pore assembly and fusion, nuclear pore spacing, as well as structural integrity. The protein is Nuclear pore membrane glycoprotein 210 (NUP210) of Homo sapiens (Human).